A 450-amino-acid polypeptide reads, in one-letter code: Phosphoglucosamine mutase (450 aa).

Residue S101 is the Phosphoserine intermediate of the active site. Positions 101, 243, 245, and 247 each coordinate Mg(2+). S101 bears the Phosphoserine mark.

The protein belongs to the phosphohexose mutase family. Requires Mg(2+) as cofactor. In terms of processing, activated by phosphorylation.

The catalysed reaction is alpha-D-glucosamine 1-phosphate = D-glucosamine 6-phosphate. Its function is as follows. Catalyzes the conversion of glucosamine-6-phosphate to glucosamine-1-phosphate. The sequence is that of Phosphoglucosamine mutase from Desulfotalea psychrophila (strain LSv54 / DSM 12343).